Reading from the N-terminus, the 299-residue chain is ATP phosphoribosyltransferase (299 aa).

Belongs to the ATP phosphoribosyltransferase family. Long subfamily. Requires Mg(2+) as cofactor.

It is found in the cytoplasm. The enzyme catalyses 1-(5-phospho-beta-D-ribosyl)-ATP + diphosphate = 5-phospho-alpha-D-ribose 1-diphosphate + ATP. The protein operates within amino-acid biosynthesis; L-histidine biosynthesis; L-histidine from 5-phospho-alpha-D-ribose 1-diphosphate: step 1/9. With respect to regulation, feedback inhibited by histidine. Catalyzes the condensation of ATP and 5-phosphoribose 1-diphosphate to form N'-(5'-phosphoribosyl)-ATP (PR-ATP). Has a crucial role in the pathway because the rate of histidine biosynthesis seems to be controlled primarily by regulation of HisG enzymatic activity. The polypeptide is ATP phosphoribosyltransferase (Campylobacter jejuni subsp. jejuni serotype O:6 (strain 81116 / NCTC 11828)).